The following is a 380-amino-acid chain: Cytochrome b (380 aa).

A run of 4 helical transmembrane segments spans residues 34 to 54 (FGSLLGICLMTQILTGLLLAM), 78 to 99 (WLIRNLHANGASFFFICIYLHI), 114 to 134 (WNTGVMLLLTLMATAFVGYVL), and 179 to 199 (FFALHFLLPFVIAGLTLIHLT). Heme b-binding residues include His84 and His98. Residues His183 and His197 each coordinate heme b. His202 serves as a coordination point for a ubiquinone. Helical transmembrane passes span 227–247 (LKDILGFMFMLLPLTTLALFS), 289–309 (LGGVLALAASVLILFLVPFLH), 321–341 (LSQLLFWVLVANLLILTWVGS), and 348–368 (FIIIGQLASLTYFTILLILFP).

The protein belongs to the cytochrome b family. In terms of assembly, the cytochrome bc1 complex contains 11 subunits: 3 respiratory subunits (MT-CYB, CYC1 and UQCRFS1), 2 core proteins (UQCRC1 and UQCRC2) and 6 low-molecular weight proteins (UQCRH/QCR6, UQCRB/QCR7, UQCRQ/QCR8, UQCR10/QCR9, UQCR11/QCR10 and a cleavage product of UQCRFS1). This cytochrome bc1 complex then forms a dimer. Requires heme b as cofactor.

The protein localises to the mitochondrion inner membrane. Functionally, component of the ubiquinol-cytochrome c reductase complex (complex III or cytochrome b-c1 complex) that is part of the mitochondrial respiratory chain. The b-c1 complex mediates electron transfer from ubiquinol to cytochrome c. Contributes to the generation of a proton gradient across the mitochondrial membrane that is then used for ATP synthesis. This chain is Cytochrome b (MT-CYB), found in Pterodroma hypoleuca (Bonin petrel).